Here is a 451-residue protein sequence, read N- to C-terminus: Adenylyltransferase and sulfurtransferase MOCS3 (451 aa).

A disordered region spans residues 42–62 (GEDSDEAEESSNDMPTPQTKL). The segment covering 43 to 52 (EDSDEAEESS) has biased composition (acidic residues). At Thr-60 the chain carries Phosphothreonine. ATP contacts are provided by residues Gly-99, Asp-120, 127–131 (SNLHR), Lys-144, and 188–189 (DN). Zn(2+)-binding residues include Cys-229 and Cys-232. The active-site Glycyl thioester intermediate; for adenylyltransferase activity is Cys-246. Cys-304 and Cys-307 together coordinate Zn(2+). The Rhodanese domain occupies 353 to 449 (QSQPHLLLDV…WTGSVDATFP (97 aa)). The active-site Cysteine persulfide intermediate; for sulfurtransferase activity is the Cys-408.

This sequence in the N-terminal section; belongs to the HesA/MoeB/ThiF family. UBA4 subfamily. It depends on Zn(2+) as a cofactor.

Its subcellular location is the cytoplasm. The protein resides in the cytosol. The enzyme catalyses [molybdopterin-synthase sulfur-carrier protein]-C-terminal Gly-Gly + ATP + H(+) = [molybdopterin-synthase sulfur-carrier protein]-C-terminal Gly-Gly-AMP + diphosphate. It carries out the reaction [molybdopterin-synthase sulfur-carrier protein]-C-terminal Gly-Gly-AMP + S-sulfanyl-L-cysteinyl-[cysteine desulfurase] + AH2 = [molybdopterin-synthase sulfur-carrier protein]-C-terminal-Gly-aminoethanethioate + L-cysteinyl-[cysteine desulfurase] + A + AMP + 2 H(+). Its pathway is tRNA modification; 5-methoxycarbonylmethyl-2-thiouridine-tRNA biosynthesis. The protein operates within cofactor biosynthesis; molybdopterin biosynthesis. Functionally, plays a central role in 2-thiolation of mcm(5)S(2)U at tRNA wobble positions of cytosolic tRNA(Lys), tRNA(Glu) and tRNA(Gln). Also essential during biosynthesis of the molybdenum cofactor. Acts by mediating the C-terminal thiocarboxylation of sulfur carriers URM1 and MOCS2A. Its N-terminus first activates URM1 and MOCS2A as acyl-adenylates (-COAMP), then the persulfide sulfur on the catalytic cysteine is transferred to URM1 and MOCS2A to form thiocarboxylation (-COSH) of their C-terminus. The reaction probably involves hydrogen sulfide that is generated from the persulfide intermediate and that acts as a nucleophile towards URM1 and MOCS2A. Subsequently, a transient disulfide bond is formed. Does not use thiosulfate as sulfur donor; NFS1 probably acting as a sulfur donor for thiocarboxylation reactions. The polypeptide is Adenylyltransferase and sulfurtransferase MOCS3 (Drosophila persimilis (Fruit fly)).